A 102-amino-acid chain; its full sequence is uncharacterized protein (102 aa).

The interval 1–102 (MPVEQDGLTG…LANIREQNHQ (102 aa)) is disordered.

This is an uncharacterized protein from Caenorhabditis elegans.